A 174-amino-acid chain; its full sequence is RNA pyrophosphohydrolase (174 aa).

Residues 6–150 (GFRPNVGIVI…KREVYRRVMK (145 aa)) form the Nudix hydrolase domain. A Nudix box motif is present at residues 38-59 (GGVDDGETPEQAMFRELYEEIG).

Belongs to the Nudix hydrolase family. RppH subfamily. A divalent metal cation is required as a cofactor.

In terms of biological role, accelerates the degradation of transcripts by removing pyrophosphate from the 5'-end of triphosphorylated RNA, leading to a more labile monophosphorylated state that can stimulate subsequent ribonuclease cleavage. The protein is RNA pyrophosphohydrolase of Tolumonas auensis (strain DSM 9187 / NBRC 110442 / TA 4).